A 148-amino-acid polypeptide reads, in one-letter code: Macrodomain Ter protein (148 aa).

Belongs to the MatP family. Homodimer.

The protein resides in the cytoplasm. Its function is as follows. Required for spatial organization of the terminus region of the chromosome (Ter macrodomain) during the cell cycle. Prevents early segregation of duplicated Ter macrodomains during cell division. Binds specifically to matS, which is a 13 bp signature motif repeated within the Ter macrodomain. The polypeptide is Macrodomain Ter protein (Haemophilus influenzae (strain ATCC 51907 / DSM 11121 / KW20 / Rd)).